Reading from the N-terminus, the 542-residue chain is Chitinase 1 (542 aa).

In terms of domain architecture, GH18 spans 68–506 (FNVLCYFTDW…NAAHEGLKRR (439 aa)). Residues 186-187 (QE) and 213-216 (GGWS) contribute to the chitin site. The active-site Proton donor is Glu-256. Chitin is bound by residues Tyr-257, 323–326 (MTYD), and Trp-486.

This sequence belongs to the glycosyl hydrolase 18 family. In terms of assembly, semipurified toxin complex consists of at least YenA1-YenA2-YenB-YenC1-YenC2-Chi1-Chi2. The Yen-TC:K9 subcomplex is about 26 nm tall and 22 nm in diameter with 5-fold symmetry and 5 copies of YenA1, YenA2, Chi1 and Chi2; the chitinase subunits may be solvent accessible on the exterior the complex. The Yen-TC:K9 subcomplex has no insecticidal activity. The native complex with additional YenB, YenC1 and YenC2 subunits is 16 nm taller and is insecticidal; the toxicity-conferring subunits are present at about 1 copy each.

It is found in the secreted. It catalyses the reaction Random endo-hydrolysis of N-acetyl-beta-D-glucosaminide (1-&gt;4)-beta-linkages in chitin and chitodextrins.. Toxin complex is secreted when grown at 25 degrees Celsius or less; at higher temperatures the proteins are present intracellularly but not secreted. Functionally, part of an orally active toxin complex (TC) with strong insecticidal effects on larvae of the Coleoptera Costelytra zealandica, Acrossidius tasmania and Adoryphorus couloni and some Lepidoptera larvae. The TC has an endochitinase activity. This subunit might aid infection by degradation of the larval peritrophic membrane. The sequence is that of Chitinase 1 from Yersinia entomophaga.